Consider the following 569-residue polypeptide: Endo-1,4-beta-xylanase 5 (569 aa).

A signal peptide spans 1–25; it reads MKNINNGFFLCMLLLLWCFVHSGIS. N197, N261, and N307 each carry an N-linked (GlcNAc...) asparagine glycan. In terms of domain architecture, GH10 spans 209–500; sequence EQTKPSFLLG…NTATGDVIDK (292 aa). Catalysis depends on E332, which acts as the Proton donor. N346 carries N-linked (GlcNAc...) asparagine glycosylation. The Nucleophile role is filled by E439. N-linked (GlcNAc...) asparagine glycans are attached at residues N490, N536, and N544.

Belongs to the glycosyl hydrolase 10 (cellulase F) family.

The enzyme catalyses Endohydrolysis of (1-&gt;4)-beta-D-xylosidic linkages in xylans.. It participates in glycan degradation; xylan degradation. Binds to and hydrolyzes insoluble and soluble xylan substrates. This Arabidopsis thaliana (Mouse-ear cress) protein is Endo-1,4-beta-xylanase 5.